A 262-amino-acid polypeptide reads, in one-letter code: Hydroxyethylthiazole kinase (262 aa).

A substrate-binding site is contributed by Met-39. 2 residues coordinate ATP: Lys-115 and Thr-160. Gly-187 is a substrate binding site.

Belongs to the Thz kinase family. The cofactor is Mg(2+).

It catalyses the reaction 5-(2-hydroxyethyl)-4-methylthiazole + ATP = 4-methyl-5-(2-phosphooxyethyl)-thiazole + ADP + H(+). Its pathway is cofactor biosynthesis; thiamine diphosphate biosynthesis; 4-methyl-5-(2-phosphoethyl)-thiazole from 5-(2-hydroxyethyl)-4-methylthiazole: step 1/1. In terms of biological role, catalyzes the phosphorylation of the hydroxyl group of 4-methyl-5-beta-hydroxyethylthiazole (THZ). The sequence is that of Hydroxyethylthiazole kinase from Staphylococcus epidermidis (strain ATCC 12228 / FDA PCI 1200).